The chain runs to 372 residues: Putative RING-H2 finger protein ATL21A (372 aa).

A signal peptide spans 1–20; that stretch reads MTFSKQLFLYLFFLFPLLHA. The helical transmembrane segment at 242 to 262 threads the bilayer; the sequence is IILLSIIGPLTIFATCIAVGV. The RING-type; atypical zinc finger occupies 320–362; sequence CPICLSEYASKETVRCIPECDHCFHSECIDVWLKIHGSCPLCR.

Belongs to the RING-type zinc finger family. ATL subfamily.

Its subcellular location is the membrane. The enzyme catalyses S-ubiquitinyl-[E2 ubiquitin-conjugating enzyme]-L-cysteine + [acceptor protein]-L-lysine = [E2 ubiquitin-conjugating enzyme]-L-cysteine + N(6)-ubiquitinyl-[acceptor protein]-L-lysine.. It functions in the pathway protein modification; protein ubiquitination. The protein is Putative RING-H2 finger protein ATL21A (ATL21A) of Arabidopsis thaliana (Mouse-ear cress).